Consider the following 232-residue polypeptide: Biosynthetic peptidoglycan transglycosylase (232 aa).

A helical transmembrane segment spans residues 12–31 (YLLWFMAASVVLVAVLRWVP).

It belongs to the glycosyltransferase 51 family.

Its subcellular location is the cell inner membrane. The enzyme catalyses [GlcNAc-(1-&gt;4)-Mur2Ac(oyl-L-Ala-gamma-D-Glu-L-Lys-D-Ala-D-Ala)](n)-di-trans,octa-cis-undecaprenyl diphosphate + beta-D-GlcNAc-(1-&gt;4)-Mur2Ac(oyl-L-Ala-gamma-D-Glu-L-Lys-D-Ala-D-Ala)-di-trans,octa-cis-undecaprenyl diphosphate = [GlcNAc-(1-&gt;4)-Mur2Ac(oyl-L-Ala-gamma-D-Glu-L-Lys-D-Ala-D-Ala)](n+1)-di-trans,octa-cis-undecaprenyl diphosphate + di-trans,octa-cis-undecaprenyl diphosphate + H(+). It participates in cell wall biogenesis; peptidoglycan biosynthesis. Functionally, peptidoglycan polymerase that catalyzes glycan chain elongation from lipid-linked precursors. The polypeptide is Biosynthetic peptidoglycan transglycosylase (Pseudomonas aeruginosa (strain ATCC 15692 / DSM 22644 / CIP 104116 / JCM 14847 / LMG 12228 / 1C / PRS 101 / PAO1)).